Reading from the N-terminus, the 410-residue chain is MTEAAKKSTKKPVDDGNFDKEIISRWPDLELSQTRFMLNHPEVDSSVKEAKLEKLQETIKEFDMAPFYELVCADFKIVVDATQLAAMKAANQKKIDEITAEVEDAEKNLGESEVRQGLLRKFEYYCQIGDKDNALKAYTATYEKTVGMGYRIDVVFAMIRVGLFFLDHHLINKFITKAKELMEQGGDWERKNRLRSYEALYRMSVRDFAGAADLFLEAVPTFGSYELMTYENLILYTVITTTFALDRPDLRTKVIRCNEVQEQLTGGGLNGTLIPVREYLESYYDCHYDRFFIQLAALESERFKFDRYLSPHFNYYSRGMRHRAYEQFLTPYKTVRIDMMAKDFGVSRAFIDRELHRLIATGQLQCRIDAVNGVIEVNHRDSKNHLYKAVIKDGDILLNRIQKLARVINA.

The PCI domain occupies Asp207–Ser382.

It belongs to the proteasome subunit S10 family. As to expression, expressed in multiple tissues including the intestine, pharynx and hypodermis.

Acts as a regulatory subunit of the 26S proteasome which is involved in the ATP-dependent degradation of ubiquitinated proteins. In Caenorhabditis elegans, this protein is 26S proteasome non-ATPase regulatory subunit 6 (rpn-7).